The following is a 421-amino-acid chain: Histidine--tRNA ligase (421 aa).

This sequence belongs to the class-II aminoacyl-tRNA synthetase family. As to quaternary structure, homodimer.

The protein localises to the cytoplasm. The enzyme catalyses tRNA(His) + L-histidine + ATP = L-histidyl-tRNA(His) + AMP + diphosphate + H(+). The polypeptide is Histidine--tRNA ligase (Francisella tularensis subsp. holarctica (strain OSU18)).